We begin with the raw amino-acid sequence, 171 residues long: Sec-independent protein translocase protein TatB (171 aa).

Residues 1-21 (MFDIGFSELLLVFIIGLVVLG) form a helical membrane-spanning segment. The segment at 89–171 (AESMKRSYVA…APSPSSSDKP (83 aa)) is disordered. Over residues 100–123 (DPEKASDEAHTIHNPVVKDNETAH) the composition is skewed to basic and acidic residues. A compositionally biased stretch (polar residues) spans 130-139 (AAQTQASSPE).

Belongs to the TatB family. The Tat system comprises two distinct complexes: a TatABC complex, containing multiple copies of TatA, TatB and TatC subunits, and a separate TatA complex, containing only TatA subunits. Substrates initially bind to the TatABC complex, which probably triggers association of the separate TatA complex to form the active translocon.

The protein localises to the cell inner membrane. In terms of biological role, part of the twin-arginine translocation (Tat) system that transports large folded proteins containing a characteristic twin-arginine motif in their signal peptide across membranes. Together with TatC, TatB is part of a receptor directly interacting with Tat signal peptides. TatB may form an oligomeric binding site that transiently accommodates folded Tat precursor proteins before their translocation. In Escherichia coli O1:K1 / APEC, this protein is Sec-independent protein translocase protein TatB.